The sequence spans 627 residues: Transducer protein MpcT (627 aa).

2 helical membrane passes run 28–48 (MLTAVGLQFLAAGGMAFLTVF) and 55–75 (LIGVGGMLALSVVAFYNTYLI). HAMP domains lie at 78–132 (ADFV…VASR) and 192–247 (EQLR…DTIS). Positions 266–502 (RVDAVADRSA…DVVGMVEEVA (237 aa)) constitute a Methyl-accepting transducer domain. E310, E416, and E507 each carry glutamate methyl ester (Glu). Disordered regions lie at residues 505 to 527 (SEETAAESDTVADNAAEQTDATD) and 557 to 627 (GTAD…ADSQ). Low complexity predominate over residues 580 to 590 (AAAVVDQPQPA).

The protein belongs to the methyl-accepting chemotaxis (MCP) protein family. As to quaternary structure, interacts with CheA, CheY and CheW1. Methylated by CheR.

It localises to the cell membrane. In terms of biological role, mediates bacteriorhodopsin- and halorhodopsin-dependent photoresponses by detecting membrane potential changes. Probably transduces the signal to the histidine kinase CheA. The protein is Transducer protein MpcT (mpcT) of Halobacterium salinarum (strain ATCC 29341 / DSM 671 / R1).